We begin with the raw amino-acid sequence, 111 residues long: uncharacterized protein (111 aa).

A coiled-coil region spans residues 3–29 (RKITSYKTSLQGLREENEDVELMNLNL). Residues 6 to 111 (TSYKTSLQGL…TWWMYCSSYY (106 aa)) form the PPM-type phosphatase domain.

This is an uncharacterized protein from Acanthamoeba polyphaga mimivirus (APMV).